The sequence spans 318 residues: MKLSLIAQFLELPLPSIEKEIVGISSLEGATPDEISFVEQDRYASSLKESRAGAVLIRASLLSLVPQGCTPLVSAHPYLDMARLSKLFAKPPLGLNAQEPQIAPSAQIAPSATIGKGAVIGERTIVMAGAVIGEGVCLGEDCLIYPNVVIYRDTQIGNRVFIHAGSVIGSDGFGYAHTERGEHIKIHHNGIVVIEDDVELGANNCIDRAVFGETRIKRGTKIDNLVQIAHNCVLGEHSIVVSQVGLAGSTTTGRNVIFGGQSATSGHLHVGDFATIAARGGVSKSIEGKKTYAGFPLMEHKEWLKLQASLKHQLKKSQ.

Residue H230 is the Proton acceptor of the active site.

This sequence belongs to the transferase hexapeptide repeat family. LpxD subfamily. Homotrimer.

It catalyses the reaction a UDP-3-O-[(3R)-3-hydroxyacyl]-alpha-D-glucosamine + a (3R)-hydroxyacyl-[ACP] = a UDP-2-N,3-O-bis[(3R)-3-hydroxyacyl]-alpha-D-glucosamine + holo-[ACP] + H(+). Its pathway is bacterial outer membrane biogenesis; LPS lipid A biosynthesis. Its function is as follows. Catalyzes the N-acylation of UDP-3-O-acylglucosamine using 3-hydroxyacyl-ACP as the acyl donor. Is involved in the biosynthesis of lipid A, a phosphorylated glycolipid that anchors the lipopolysaccharide to the outer membrane of the cell. The sequence is that of UDP-3-O-acylglucosamine N-acyltransferase from Wolinella succinogenes (strain ATCC 29543 / DSM 1740 / CCUG 13145 / JCM 31913 / LMG 7466 / NCTC 11488 / FDC 602W) (Vibrio succinogenes).